A 474-amino-acid chain; its full sequence is tRNA-2-methylthio-N(6)-dimethylallyladenosine synthase (474 aa).

The MTTase N-terminal domain maps to 3 to 120 (KKLLIKTWGC…LPEMIKQSQT (118 aa)). [4Fe-4S] cluster contacts are provided by cysteine 12, cysteine 49, cysteine 83, cysteine 157, cysteine 161, and cysteine 164. Residues 143–375 (RAEGATAFVS…QQTINAQAMR (233 aa)) enclose the Radical SAM core domain. In terms of domain architecture, TRAM spans 378–441 (RLMLATEQRV…ANSLRGELVR (64 aa)).

It belongs to the methylthiotransferase family. MiaB subfamily. In terms of assembly, monomer. [4Fe-4S] cluster serves as cofactor.

The protein resides in the cytoplasm. It catalyses the reaction N(6)-dimethylallyladenosine(37) in tRNA + (sulfur carrier)-SH + AH2 + 2 S-adenosyl-L-methionine = 2-methylsulfanyl-N(6)-dimethylallyladenosine(37) in tRNA + (sulfur carrier)-H + 5'-deoxyadenosine + L-methionine + A + S-adenosyl-L-homocysteine + 2 H(+). Its function is as follows. Catalyzes the methylthiolation of N6-(dimethylallyl)adenosine (i(6)A), leading to the formation of 2-methylthio-N6-(dimethylallyl)adenosine (ms(2)i(6)A) at position 37 in tRNAs that read codons beginning with uridine. In Vibrio parahaemolyticus serotype O3:K6 (strain RIMD 2210633), this protein is tRNA-2-methylthio-N(6)-dimethylallyladenosine synthase.